We begin with the raw amino-acid sequence, 201 residues long: Holliday junction resolvase RecU (201 aa).

Positions 87, 89, 102, and 121 each coordinate Mg(2+).

It belongs to the RecU family. The cofactor is Mg(2+).

It is found in the cytoplasm. The catalysed reaction is Endonucleolytic cleavage at a junction such as a reciprocal single-stranded crossover between two homologous DNA duplexes (Holliday junction).. Its function is as follows. Endonuclease that resolves Holliday junction intermediates in genetic recombination. Cleaves mobile four-strand junctions by introducing symmetrical nicks in paired strands. Promotes annealing of linear ssDNA with homologous dsDNA. Required for DNA repair, homologous recombination and chromosome segregation. The chain is Holliday junction resolvase RecU from Listeria monocytogenes serotype 4b (strain F2365).